The sequence spans 156 residues: Probable cyclic pyranopterin monophosphate synthase (156 aa).

Substrate-binding positions include 73–75 (MCH) and 109–110 (ME). Asp-124 is an active-site residue.

The protein belongs to the MoaC family. Homohexamer; trimer of dimers.

The catalysed reaction is (8S)-3',8-cyclo-7,8-dihydroguanosine 5'-triphosphate = cyclic pyranopterin phosphate + diphosphate. It participates in cofactor biosynthesis; molybdopterin biosynthesis. In terms of biological role, catalyzes the conversion of (8S)-3',8-cyclo-7,8-dihydroguanosine 5'-triphosphate to cyclic pyranopterin monophosphate (cPMP). The sequence is that of Probable cyclic pyranopterin monophosphate synthase from Archaeoglobus fulgidus (strain ATCC 49558 / DSM 4304 / JCM 9628 / NBRC 100126 / VC-16).